The chain runs to 377 residues: NADH dehydrogenase [ubiquinone] 1 alpha subcomplex subunit 9, mitochondrial (377 aa).

The N-terminal 35 residues, 1 to 35 (MAAAAQSRVVRVLSMSRSAITAIATSVCHGPPCRQ), are a transit peptide targeting the mitochondrion. Position 175 is an N6-succinyllysine (lysine 175). Residues lysine 189 and lysine 370 each carry the N6-acetyllysine modification.

Belongs to the complex I NDUFA9 subunit family. In terms of assembly, complex I is composed of 45 different subunits. This a component of the hydrophobic protein fraction. Interacts with BLOC1S1. Interacts with SLC2A4. Interacts with CLOCK. Interacts with RAB5IF. It depends on FAD as a cofactor. Post-translationally, acetylated on lysine residues. BLOC1S1 is required for acetylation. Acetylated by CLOCK in a circadian manner.

Its subcellular location is the mitochondrion matrix. Accessory subunit of the mitochondrial membrane respiratory chain NADH dehydrogenase (Complex I), that is believed not to be involved in catalysis. Complex I functions in the transfer of electrons from NADH to the respiratory chain. The immediate electron acceptor for the enzyme is believed to be ubiquinone. This is NADH dehydrogenase [ubiquinone] 1 alpha subcomplex subunit 9, mitochondrial (NDUFA9) from Pan troglodytes (Chimpanzee).